Here is a 352-residue protein sequence, read N- to C-terminus: UDP-N-acetylglucosamine--N-acetylmuramyl-(pentapeptide) pyrophosphoryl-undecaprenol N-acetylglucosamine transferase (352 aa).

UDP-N-acetyl-alpha-D-glucosamine contacts are provided by residues 13–15, N125, R161, S189, I242, 261–266, and Q286; these read TGG and ALTVSE.

It belongs to the glycosyltransferase 28 family. MurG subfamily.

The protein resides in the cell inner membrane. The catalysed reaction is di-trans,octa-cis-undecaprenyl diphospho-N-acetyl-alpha-D-muramoyl-L-alanyl-D-glutamyl-meso-2,6-diaminopimeloyl-D-alanyl-D-alanine + UDP-N-acetyl-alpha-D-glucosamine = di-trans,octa-cis-undecaprenyl diphospho-[N-acetyl-alpha-D-glucosaminyl-(1-&gt;4)]-N-acetyl-alpha-D-muramoyl-L-alanyl-D-glutamyl-meso-2,6-diaminopimeloyl-D-alanyl-D-alanine + UDP + H(+). It participates in cell wall biogenesis; peptidoglycan biosynthesis. Its function is as follows. Cell wall formation. Catalyzes the transfer of a GlcNAc subunit on undecaprenyl-pyrophosphoryl-MurNAc-pentapeptide (lipid intermediate I) to form undecaprenyl-pyrophosphoryl-MurNAc-(pentapeptide)GlcNAc (lipid intermediate II). This Erwinia tasmaniensis (strain DSM 17950 / CFBP 7177 / CIP 109463 / NCPPB 4357 / Et1/99) protein is UDP-N-acetylglucosamine--N-acetylmuramyl-(pentapeptide) pyrophosphoryl-undecaprenol N-acetylglucosamine transferase.